Reading from the N-terminus, the 568-residue chain is Phenylalanine--tRNA ligase beta subunit (568 aa).

In terms of domain architecture, B5 spans Leu278–Pro353. 4 residues coordinate Mg(2+): Asp331, Asp337, Glu340, and Asp341.

Belongs to the phenylalanyl-tRNA synthetase beta subunit family. Type 2 subfamily. In terms of assembly, tetramer of two alpha and two beta subunits. Mg(2+) is required as a cofactor.

It is found in the cytoplasm. The catalysed reaction is tRNA(Phe) + L-phenylalanine + ATP = L-phenylalanyl-tRNA(Phe) + AMP + diphosphate + H(+). The polypeptide is Phenylalanine--tRNA ligase beta subunit (Thermococcus gammatolerans (strain DSM 15229 / JCM 11827 / EJ3)).